The sequence spans 156 residues: Ribonuclease pancreatic (156 aa).

The first 28 residues, 1–28 (MALEKSLVLLPLLVLILLVLGWVQPSLG), serve as a signal peptide directing secretion. Over residues 33 to 43 (AKKFQRQHVDS) the composition is skewed to basic and acidic residues. The interval 33-53 (AKKFQRQHVDSDSSPSSSSTY) is disordered. Substrate contacts are provided by lysine 35 and arginine 38. The Proton acceptor role is filled by histidine 40. 4 cysteine pairs are disulfide-bonded: cysteine 54/cysteine 112, cysteine 68/cysteine 123, cysteine 86/cysteine 138, and cysteine 93/cysteine 100. N-linked (GlcNAc...) asparagine glycosylation is present at asparagine 62. Substrate-binding positions include 69 to 73 (KPVNT) and lysine 94. N-linked (GlcNAc...) asparagine glycosylation is present at asparagine 104. Arginine 113 is a substrate binding site. Asparagine 116 is a glycosylation site (N-linked (GlcNAc...) asparagine). Histidine 147 (proton donor) is an active-site residue.

The protein belongs to the pancreatic ribonuclease family. In terms of assembly, monomer. Interacts with and forms tight 1:1 complexes with RNH1. Dimerization of two such complexes may occur. Interaction with RNH1 inhibits this protein. Pancreas and other tissues and body fluids (indicating it may have other physiological functions besides its role in digestion).

It localises to the secreted. The enzyme catalyses an [RNA] containing cytidine + H2O = an [RNA]-3'-cytidine-3'-phosphate + a 5'-hydroxy-ribonucleotide-3'-[RNA].. It carries out the reaction an [RNA] containing uridine + H2O = an [RNA]-3'-uridine-3'-phosphate + a 5'-hydroxy-ribonucleotide-3'-[RNA].. Its function is as follows. Endonuclease that catalyzes the cleavage of RNA on the 3' side of pyrimidine nucleotides. Acts on single-stranded and double-stranded RNA. The polypeptide is Ribonuclease pancreatic (RNASE1) (Pan troglodytes (Chimpanzee)).